Reading from the N-terminus, the 204-residue chain is CLAVATA3/ESR (CLE)-related protein 1 (204 aa).

The signal sequence occupies residues 1–21 (MAKNAMLCLLILSVVLALAFA). Residues 21–83 (ATNEKDDKEA…SNQLQNAYRM (63 aa)) are required for secretion from the host cytoplasm to the host apoplasm. Asparagine 32 carries an N-linked (GlcNAc...) asparagine glycan. Residues 116–204 (RNTGMKPQSY…TPGVPDRQHR (89 aa)) form a disordered region. Basic and acidic residues-rich tracts occupy residues 139–151 (LHNR…EQKR), 160–172 (LHNR…EQKR), and 181–193 (LHNR…EQKR). 3 propeptides (removed in mature form) span residues 142–150 (REKILEEQK), 163–171 (REKTLEEQK), and 184–192 (REKTLEEQK).

The protein belongs to the CLV3/ESR signal peptide family. Post-translationally, preprocessing of the precursor by host proteases leads first to the production of 21-mer CLE-containing peptides (Arg-130 to Lys-150, Arg-151 to Lys-171 and Arg-172 to Lys-192) followed by an ultimate C-term trimming to give the mature 12-mer CLE1-1 peptide. As to expression, highly expressed exclusively within the dorsal esophageal gland cell during syncytium formation in host plants.

The protein resides in the secreted. The protein localises to the host cytoplasm. Its subcellular location is the host extracellular space. It localises to the extracellular space. It is found in the apoplast. Its function is as follows. Mimics host plant CLE extracellular signal peptides that regulate cell fate. May play a role in the differentiation or division of feeding cells (syncytia) induced in plant roots during infection. This chain is CLAVATA3/ESR (CLE)-related protein 1, found in Globodera rostochiensis (Golden nematode worm).